We begin with the raw amino-acid sequence, 234 residues long: Adenylate dimethylallyltransferase (234 aa).

Belongs to the isopentenyl transferase family.

The catalysed reaction is dimethylallyl diphosphate + AMP = N(6)-(dimethylallyl)adenosine 5'-phosphate + diphosphate. Functionally, transfers dimethylallyl groups to AMP as part of the biosynthesis of cytokinin phytohormones. The chain is Adenylate dimethylallyltransferase (ptz) from Pseudomonas savastanoi (Pseudomonas syringae pv. savastanoi).